We begin with the raw amino-acid sequence, 205 residues long: MSLSIPKIENGAAGDLEVSDKVFGQGFNESLVHQLVVGYLAAARSGTKAQKSRSDVSGGGKKPWKQKGSGHARAGTTRSPLWRTGGVTFAASNRNYRQKLNKKMYRAAVRSIFSELLRQGRLVVSDGIVPTSPKTRELAAKLKSFGEGYTVILAEQLDLNLALSSRNLPNVSINTADTLSPVDLVHAERVIATSSAIRKLEVRLS.

The disordered stretch occupies residues 48 to 79; the sequence is KAQKSRSDVSGGGKKPWKQKGSGHARAGTTRS.

Belongs to the universal ribosomal protein uL4 family. Part of the 50S ribosomal subunit.

Functionally, one of the primary rRNA binding proteins, this protein initially binds near the 5'-end of the 23S rRNA. It is important during the early stages of 50S assembly. It makes multiple contacts with different domains of the 23S rRNA in the assembled 50S subunit and ribosome. Its function is as follows. Forms part of the polypeptide exit tunnel. In Methylococcus capsulatus (strain ATCC 33009 / NCIMB 11132 / Bath), this protein is Large ribosomal subunit protein uL4.